We begin with the raw amino-acid sequence, 385 residues long: ELAV-like protein 4 (385 aa).

The interval 12–48 (TMEPQVSNGPTSNTSNGPSSNNRNCPSPMQTGATTDD) is disordered. A compositionally biased stretch (low complexity) spans 18–33 (SNGPTSNTSNGPSSNN). The span at 34-48 (RNCPSPMQTGATTDD) shows a compositional bias: polar residues. Phosphoserine is present on S38. 2 RRM domains span residues 51-129 (TNLI…YARP) and 137-217 (ANLY…FANN). S233 carries the post-translational modification Phosphoserine. R248 carries the asymmetric dimethylarginine; by CARM1; alternate modification. Residue R248 is modified to Omega-N-methylarginine; by CARM1; alternate. The 79-residue stretch at 302–380 (WCIFVYNLSP…RVLQVSFKTN (79 aa)) folds into the RRM 3 domain.

This sequence belongs to the RRM elav family. As to quaternary structure, component of a TAU mRNP complex, at least composed of IGF2BP1, ELAVL4 and G3BP. Associates with the EIF4F cap-binding complex, composed of EIF4G, EIF4A, EIF4E and PABP. Within the EIF4F cap-binding complex, interacts with EIF4A. Interacts with SMN (via Tudor domain) in an RNA-independent manner; the interaction is required for localization of ELAVL4 to RNA granules. Interacts with MAP1 light chain LC1 (via C-terminus); the interaction contributes to the association of ELAVL4 with microtubules. Interacts with MAP1 light chain LC2. Methylated by CARM1, which leads to reduced RNA-binding activity and enhanced interaction with SMN. Methylation at Arg-248 by CARM1 weakens protective binding to the 3'UTR of CDKN1A mRNA and down-regulates CDKN1A protein expression, thereby maintaining cells in a proliferative state. Methylation is inhibited by NGF, which facilitates neurite outgrowth. As to expression, expressed in pancreatic beta cells (at protein level). Expressed in the brain.

The protein localises to the cytoplasm. Its subcellular location is the perikaryon. It is found in the cell projection. It localises to the dendrite. The protein resides in the axon. The protein localises to the growth cone. Functionally, RNA-binding protein that is involved in the post-transcriptional regulation of mRNAs. Plays a role in the regulation of mRNA stability, alternative splicing and translation. Binds to AU-rich element (ARE) sequences in the 3' untranslated region (UTR) of target mRNAs, including GAP43, VEGF, FOS, CDKN1A and ACHE mRNA. Many of the target mRNAs are coding for RNA-binding proteins, transcription factors and proteins involved in RNA processing and/or neuronal development and function. By binding to the mRNA 3'UTR, decreases mRNA deadenylation and thereby contributes to the stabilization of mRNA molecules and their protection from decay. Also binds to the polyadenylated (poly(A)) tail in the 3'UTR of mRNA, thereby increasing its affinity for mRNA binding. Mainly plays a role in neuron-specific RNA processing by stabilization of mRNAs such as GAP43, ACHE and mRNAs of other neuronal proteins, thereby contributing to the differentiation of neural progenitor cells, nervous system development, learning and memory mechanisms. Involved in the negative regulation of the proliferative activity of neuronal stem cells and in the positive regulation of neuronal differentiation of neural progenitor cells. Promotes neuronal differentiation of neural stem/progenitor cells in the adult subventricular zone of the hippocampus by binding to and stabilizing SATB1 mRNA. Binds and stabilizes MSI1 mRNA in neural stem cells. Exhibits increased binding to ACHE mRNA during neuronal differentiation, thereby stabilizing ACHE mRNA and enhancing its expression. Protects CDKN1A mRNA from decay by binding to its 3'-UTR. May bind to APP and BACE1 mRNAS and the BACE1AS lncRNA and enhance their stabilization. Plays a role in neurite outgrowth and in the establishment and maturation of dendritic arbors, thereby contributing to neocortical and hippocampal circuitry function. Stabilizes GAP43 mRNA and protects it from decay during postembryonic development in the brain. By promoting the stabilization of GAP43 mRNA, plays a role in NGF-mediated neurite outgrowth. Binds to BDNF long 3'UTR mRNA, thereby leading to its stabilization and increased dendritic translation after activation of PKC. By increasing translation of BDNF after nerve injury, may contribute to nerve regeneration. Acts as a stabilizing factor by binding to the 3'UTR of NOVA1 mRNA, thereby increasing its translation and enhancing its functional activity in neuron-specific splicing. Stimulates translation of mRNA in a poly(A)- and cap-dependent manner, possibly by associating with the EIF4F cap-binding complex. May also negatively regulate translation by binding to the 5'UTR of Ins2 mRNA, thereby repressing its translation. Upon glucose stimulation, Ins2 mRNA is released from ELAVL4 and translational inhibition is abolished. Also plays a role in the regulation of alternative splicing. May regulate alternative splicing of CALCA pre-mRNA into Calcitonin and Calcitonin gene-related peptide 1 (CGRP) by competing with splicing regulator TIAR for binding to U-rich intronic sequences of CALCA pre-mRNA. This chain is ELAV-like protein 4 (ELAVL4), found in Homo sapiens (Human).